We begin with the raw amino-acid sequence, 204 residues long: Holliday junction branch migration complex subunit RuvA (204 aa).

The interval 1-67 (MIDYLYGTLD…GGVISLYGFF (67 aa)) is domain I. Residues 68-149 (TIEEREMYLL…TVNVLNKEKQ (82 aa)) are domain II. The interval 150–154 (TGAET) is flexible linker. Positions 155–204 (IKNTMVSEAIAGLITLGYKMQQARVAVTNVYEHNENITLEDLIKKSLQYL) are domain III.

It belongs to the RuvA family. In terms of assembly, homotetramer. Forms an RuvA(8)-RuvB(12)-Holliday junction (HJ) complex. HJ DNA is sandwiched between 2 RuvA tetramers; dsDNA enters through RuvA and exits via RuvB. An RuvB hexamer assembles on each DNA strand where it exits the tetramer. Each RuvB hexamer is contacted by two RuvA subunits (via domain III) on 2 adjacent RuvB subunits; this complex drives branch migration. In the full resolvosome a probable DNA-RuvA(4)-RuvB(12)-RuvC(2) complex forms which resolves the HJ.

Its subcellular location is the cytoplasm. In terms of biological role, the RuvA-RuvB-RuvC complex processes Holliday junction (HJ) DNA during genetic recombination and DNA repair, while the RuvA-RuvB complex plays an important role in the rescue of blocked DNA replication forks via replication fork reversal (RFR). RuvA specifically binds to HJ cruciform DNA, conferring on it an open structure. The RuvB hexamer acts as an ATP-dependent pump, pulling dsDNA into and through the RuvAB complex. HJ branch migration allows RuvC to scan DNA until it finds its consensus sequence, where it cleaves and resolves the cruciform DNA. In Endomicrobium trichonymphae, this protein is Holliday junction branch migration complex subunit RuvA.